The sequence spans 55 residues: Large ribosomal subunit protein bL33 (55 aa).

Belongs to the bacterial ribosomal protein bL33 family.

This Hamiltonella defensa subsp. Acyrthosiphon pisum (strain 5AT) protein is Large ribosomal subunit protein bL33.